The chain runs to 401 residues: Type 3 secretion system translocon protein SctE (401 aa).

The stretch at 129–160 forms a coiled coil; sequence IQRLHEQNMKKIEENQEKIKETEENAKQVKKS. The next 2 helical transmembrane spans lie at 176–196 and 224–244; these read VIVG…AMMV and ILGP…TVMT. Residues 345–379 are a coiled coil; that stretch reads LALNKADMAALQSIIDRLKEELSHLSESHQQVMEL.

This sequence belongs to the SctE/SipB/YopB family. The core secretion machinery of the T3SS is composed of approximately 20 different proteins, including cytoplasmic components, a base, an export apparatus and a needle. This subunit is involved in the formation of a pore, called the translocon, in host membrane. Interacts with YopD/SctB. Together with YopD/SctB, forms a multimeric integral membrane complex.

It is found in the secreted. Its subcellular location is the host membrane. In terms of biological role, component of the type III secretion system (T3SS), also called injectisome, which is used to inject bacterial effector proteins into eukaryotic host cells. YopB/SctE and YopD/SctB are inserted into the host membrane where they form a pore and allow the translocation of effector proteins into the cytosol of target cells. Is an essential virulence determinant. Required for YopE and YopH translocation. Shows membrane disruptive activity in vitro. Functionally, interaction with the host cell triggers a signaling response, via activation of the small GTPase Ras, the MAPK kinases ERK and JNK and the nuclear factor NF-kappa-B pathways, and production of the proinflammatory cytokine interleukin-8 (IL-8). YopB/SctE-dependent signaling response is counteracted by YopE, YopH and YopJ in infected host cells. YopB/SctE is directly responsible for signaling and its insertion in the membrane is important to activate the signaling response in the host cell. The sequence is that of Type 3 secretion system translocon protein SctE from Yersinia pseudotuberculosis serotype I (strain IP32953).